A 223-amino-acid chain; its full sequence is Endonuclease NucS (223 aa).

This sequence belongs to the NucS endonuclease family.

The protein resides in the cytoplasm. Functionally, cleaves both 3' and 5' ssDNA extremities of branched DNA structures. The protein is Endonuclease NucS of Streptomyces coelicolor (strain ATCC BAA-471 / A3(2) / M145).